A 232-amino-acid polypeptide reads, in one-letter code: Large ribosomal subunit protein uL1 (232 aa).

This sequence belongs to the universal ribosomal protein uL1 family. Part of the 50S ribosomal subunit.

Functionally, binds directly to 23S rRNA. The L1 stalk is quite mobile in the ribosome, and is involved in E site tRNA release. In terms of biological role, protein L1 is also a translational repressor protein, it controls the translation of the L11 operon by binding to its mRNA. The polypeptide is Large ribosomal subunit protein uL1 (Thermosipho africanus (strain TCF52B)).